The primary structure comprises 403 residues: RILP-like protein 1 (403 aa).

S7 is modified (phosphoserine). In terms of domain architecture, RH1 spans 10 to 97 (AAESALEKNV…RLERMDRIEK (88 aa)). An S-nitrosocysteine modification is found at C47. The stretch at 76–265 (ELDELRLELD…GELNQNGEEE (190 aa)) forms a coiled coil. The 66-residue stretch at 291–356 (RPRFTLQELR…PQPESGIKRL (66 aa)) folds into the RH2 domain. Residues 329 to 348 (EEENQIPQPPPIAHPRMSPQ) form a disordered region.

Belongs to the RILPL family. Interacts (when S-nitrosylated) with GAPDH. Interacts with RAB8A; interaction is dependent on the phosphorylation of 'Thr-72' of RAB8A. Interacts with RAB10 and RAB12; the interaction is dependent on the phosphorylation of 'Thr-73' of RAB10, and 'Ser-105' of RAB12. Post-translationally, S-nitrosylation is required for the interaction with GAPDH.

Its subcellular location is the cytoplasm. It localises to the cytosol. The protein localises to the cytoskeleton. The protein resides in the microtubule organizing center. It is found in the centrosome. Its subcellular location is the centriole. It localises to the cilium basal body. In terms of biological role, plays a role in the regulation of cell shape and polarity. Plays a role in cellular protein transport, including protein transport away from primary cilia. Neuroprotective protein, which acts by sequestring GAPDH in the cytosol and prevent the apoptotic function of GAPDH in the nucleus. Competes with SIAH1 for binding GAPDH. Does not regulate lysosomal morphology and distribution. Binds to RAB10 following LRRK2-mediated RAB10 phosphorylation which leads to inhibition of ciliogenesis. The sequence is that of RILP-like protein 1 (RILPL1) from Bos taurus (Bovine).